A 112-amino-acid chain; its full sequence is Integration host factor subunit alpha (112 aa).

The protein belongs to the bacterial histone-like protein family. Heterodimer of an alpha and a beta chain.

Its function is as follows. This protein is one of the two subunits of integration host factor, a specific DNA-binding protein that functions in genetic recombination as well as in transcriptional and translational control. This is Integration host factor subunit alpha from Rhizobium leguminosarum bv. trifolii (strain WSM2304).